The primary structure comprises 302 residues: ATP synthase gamma chain, sodium ion specific (302 aa).

It belongs to the ATPase gamma chain family. In terms of assembly, F-type ATPases have 2 components, CF(1) - the catalytic core - and CF(0) - the membrane proton channel. CF(1) has five subunits: alpha(3), beta(3), gamma(1), delta(1), epsilon(1). CF(0) has three main subunits: a, b and c.

The protein resides in the cell membrane. With respect to regulation, inhibited by nitrate. Its function is as follows. Produces ATP from ADP in the presence of a proton gradient across the membrane. The gamma chain is believed to be important in regulating ATPase activity and the flow of protons through the CF(0) complex. The polypeptide is ATP synthase gamma chain, sodium ion specific (atpG) (Acetobacterium woodii (strain ATCC 29683 / DSM 1030 / JCM 2381 / KCTC 1655 / WB1)).